Consider the following 339-residue polypeptide: Glycerol-3-phosphate dehydrogenase [NAD(P)+] (339 aa).

S15, Y16, H36, and K110 together coordinate NADPH. The sn-glycerol 3-phosphate site is built by K110, G139, and T141. An NADPH-binding site is contributed by A143. The sn-glycerol 3-phosphate site is built by K195, D248, S258, R259, and N260. K195 serves as the catalytic Proton acceptor. Residue R259 participates in NADPH binding. The NADPH site is built by V283 and E285.

Belongs to the NAD-dependent glycerol-3-phosphate dehydrogenase family.

Its subcellular location is the cytoplasm. The catalysed reaction is sn-glycerol 3-phosphate + NAD(+) = dihydroxyacetone phosphate + NADH + H(+). The enzyme catalyses sn-glycerol 3-phosphate + NADP(+) = dihydroxyacetone phosphate + NADPH + H(+). The protein operates within membrane lipid metabolism; glycerophospholipid metabolism. Its function is as follows. Catalyzes the reduction of the glycolytic intermediate dihydroxyacetone phosphate (DHAP) to sn-glycerol 3-phosphate (G3P), the key precursor for phospholipid synthesis. This Erwinia tasmaniensis (strain DSM 17950 / CFBP 7177 / CIP 109463 / NCPPB 4357 / Et1/99) protein is Glycerol-3-phosphate dehydrogenase [NAD(P)+].